We begin with the raw amino-acid sequence, 101 residues long: Integration host factor subunit beta (101 aa).

Residues 57–76 (PARAGRNPRTGEHVPVDQKS) are disordered.

This sequence belongs to the bacterial histone-like protein family. Heterodimer of an alpha and a beta chain.

This protein is one of the two subunits of integration host factor, a specific DNA-binding protein that functions in genetic recombination as well as in transcriptional and translational control. The chain is Integration host factor subunit beta from Nitrobacter winogradskyi (strain ATCC 25391 / DSM 10237 / CIP 104748 / NCIMB 11846 / Nb-255).